Consider the following 138-residue polypeptide: Lutropin subunit beta (138 aa).

The first 17 residues, 1–17 (LQGLLLWLLLSVGGVWA), serve as a signal peptide directing secretion. Disulfide bonds link C26–C74, C40–C89, C43–C127, C51–C105, C55–C107, and C110–C117. Residue N30 is glycosylated (N-linked (GlcNAc...) asparagine).

Belongs to the glycoprotein hormones subunit beta family. Heterodimer of a common alpha chain and a unique beta chain which confers biological specificity to thyrotropin, lutropin, follitropin and gonadotropin.

It localises to the secreted. In terms of biological role, promotes spermatogenesis and ovulation by stimulating the testes and ovaries to synthesize steroids. The protein is Lutropin subunit beta (LHB) of Canis lupus familiaris (Dog).